The sequence spans 260 residues: ATP synthase subunit a (260 aa).

7 helical membrane passes run 29-49 (FSFTNSSLFMLLTLSFFLLLI), 95-115 (FFPCILVTFLFLLFCNLQGMI), 124-144 (HFLITLALSFSIFIGITIVGF), 151-171 (FFSFLLPAGVPLPLAPFLVLL), 191-211 (MMAGHSLVKILSGFAWTMLCM), 213-233 (EIFYFIGALGPLFIVLALTGL), and 237-257 (VAILQAYVFTILICIYLNDAI).

The protein belongs to the ATPase A chain family. In terms of assembly, F-type ATPases have 2 components, CF(1) - the catalytic core - and CF(0) - the membrane proton channel. CF(1) has five subunits: alpha(3), beta(3), gamma(1), delta(1), epsilon(1). CF(0) has three main subunits: a, b and c.

It localises to the mitochondrion inner membrane. Functionally, mitochondrial membrane ATP synthase (F(1)F(0) ATP synthase or Complex V) produces ATP from ADP in the presence of a proton gradient across the membrane which is generated by electron transport complexes of the respiratory chain. F-type ATPases consist of two structural domains, F(1) - containing the extramembraneous catalytic core and F(0) - containing the membrane proton channel, linked together by a central stalk and a peripheral stalk. During catalysis, ATP synthesis in the catalytic domain of F(1) is coupled via a rotary mechanism of the central stalk subunits to proton translocation. Key component of the proton channel; it may play a direct role in the translocation of protons across the membrane. The polypeptide is ATP synthase subunit a (ATP6) (Brassica napus (Rape)).